The primary structure comprises 185 residues: MEKHLVMYLTRKSIMLLRKYPLVTEFQVSKCGSHIVKIRRDVLYPKRTKYSKYSKCRCSRGCEPDGTQLGFGRYGTKSCRAGRLSYRAIEAARRATIGQFHRAMSGQFRRNCKIWVRVLADLPITGKPAEVRMGRGKGNPTGWIARVSTGQIPFEMDGVSLSNARQAARLAAHKPCSSTKFVQWS.

Belongs to the universal ribosomal protein uL16 family.

It localises to the mitochondrion. In Oryza sativa subsp. japonica (Rice), this protein is Large ribosomal subunit protein uL16m (RPL16).